An 874-amino-acid polypeptide reads, in one-letter code: Leucine--tRNA ligase (874 aa).

The short motif at 43 to 53 (PYPSGRIHIGH) is the 'HIGH' region element. A 'KMSKS' region motif is present at residues 630–634 (KMSKS). ATP is bound at residue lysine 633.

It belongs to the class-I aminoacyl-tRNA synthetase family.

The protein resides in the cytoplasm. It catalyses the reaction tRNA(Leu) + L-leucine + ATP = L-leucyl-tRNA(Leu) + AMP + diphosphate. In Bradyrhizobium sp. (strain ORS 278), this protein is Leucine--tRNA ligase.